A 513-amino-acid polypeptide reads, in one-letter code: Bifunctional purine biosynthesis protein PurH (513 aa).

Positions 1–147 constitute an MGS-like domain; sequence MIQIKRALVS…KNHKNVVVLT (147 aa).

It belongs to the PurH family.

It carries out the reaction (6R)-10-formyltetrahydrofolate + 5-amino-1-(5-phospho-beta-D-ribosyl)imidazole-4-carboxamide = 5-formamido-1-(5-phospho-D-ribosyl)imidazole-4-carboxamide + (6S)-5,6,7,8-tetrahydrofolate. The enzyme catalyses IMP + H2O = 5-formamido-1-(5-phospho-D-ribosyl)imidazole-4-carboxamide. Its pathway is purine metabolism; IMP biosynthesis via de novo pathway; 5-formamido-1-(5-phospho-D-ribosyl)imidazole-4-carboxamide from 5-amino-1-(5-phospho-D-ribosyl)imidazole-4-carboxamide (10-formyl THF route): step 1/1. It participates in purine metabolism; IMP biosynthesis via de novo pathway; IMP from 5-formamido-1-(5-phospho-D-ribosyl)imidazole-4-carboxamide: step 1/1. The chain is Bifunctional purine biosynthesis protein PurH from Leptospira biflexa serovar Patoc (strain Patoc 1 / Ames).